A 182-amino-acid chain; its full sequence is Isopentenyl-diphosphate Delta-isomerase (182 aa).

Mn(2+)-binding residues include His25 and His32. Residues 30–164 (PLHLAFSCWL…PWAFSPWMVM (135 aa)) form the Nudix hydrolase domain. Cys67 is a catalytic residue. Residue His69 participates in Mn(2+) binding. A Mg(2+)-binding site is contributed by Glu87. Residues Glu114 and Glu116 each coordinate Mn(2+). Glu116 is a catalytic residue.

Belongs to the IPP isomerase type 1 family. As to quaternary structure, homodimer. The cofactor is Mg(2+). It depends on Mn(2+) as a cofactor.

It localises to the cytoplasm. The enzyme catalyses isopentenyl diphosphate = dimethylallyl diphosphate. The protein operates within isoprenoid biosynthesis; dimethylallyl diphosphate biosynthesis; dimethylallyl diphosphate from isopentenyl diphosphate: step 1/1. Catalyzes the 1,3-allylic rearrangement of the homoallylic substrate isopentenyl (IPP) to its highly electrophilic allylic isomer, dimethylallyl diphosphate (DMAPP). This is Isopentenyl-diphosphate Delta-isomerase from Salmonella arizonae (strain ATCC BAA-731 / CDC346-86 / RSK2980).